A 380-amino-acid polypeptide reads, in one-letter code: Acid phosphatase-like protein XcAP-3 (380 aa).

Residues 1 to 19 (MKATILLFLVLAVVQLSTA) form the signal peptide. Intrachain disulfides connect Cys147/Cys374, Cys167/Cys221, and Cys347/Cys351.

The protein belongs to the histidine acid phosphatase family.

It is found in the secreted. Functionally, probably modulates blood feeding of fleas on vertebrate species by binding and sequestering different mediators involved in the host response. Binds histamine. Binds leukotriene C4. Does not bind serotonin, adrenaline, noradrenaline, leukotriene B4, leukotriene D4, leukotriene E4, ADP, and stable analogs of thromboxane A2: U-46619 and cTXA2. In Xenopsylla cheopis (Oriental rat flea), this protein is Acid phosphatase-like protein XcAP-3.